The following is a 340-amino-acid chain: Ribosomal RNA large subunit methyltransferase F (340 aa).

The protein belongs to the methyltransferase superfamily. METTL16/RlmF family.

The protein localises to the cytoplasm. It carries out the reaction adenosine(1618) in 23S rRNA + S-adenosyl-L-methionine = N(6)-methyladenosine(1618) in 23S rRNA + S-adenosyl-L-homocysteine + H(+). Specifically methylates the adenine in position 1618 of 23S rRNA. The polypeptide is Ribosomal RNA large subunit methyltransferase F (Dechloromonas aromatica (strain RCB)).